Consider the following 367-residue polypeptide: Peptidyl-prolyl cis-trans isomerase D (367 aa).

Positions F7 to E171 constitute a PPIase cyclophilin-type domain. TPR repeat units follow at residues I213–Y246, I264–A297, and A302–D335.

It belongs to the cyclophilin-type PPIase family. PPIase D subfamily.

The protein resides in the cytoplasm. The catalysed reaction is [protein]-peptidylproline (omega=180) = [protein]-peptidylproline (omega=0). Functionally, PPIases accelerate the folding of proteins. It catalyzes the cis-trans isomerization of proline imidic peptide bonds in oligopeptides. The sequence is that of Peptidyl-prolyl cis-trans isomerase D (CPR6) from Yarrowia lipolytica (strain CLIB 122 / E 150) (Yeast).